Consider the following 195-residue polypeptide: uncharacterized protein (195 aa).

4 helical membrane-spanning segments follow: residues 89-106, 111-128, 149-168, and 172-194; these read SWISVLLIVTIIALPLLP, HLPLAVYLMVLAGYVWKR, VKISRVGAVYLLFLAVVLLL, and LNALVVLLLIAVSCAAFFLFLNI.

The protein localises to the cell membrane. This is an uncharacterized protein from Bacillus subtilis (strain 168).